The sequence spans 160 residues: Endoribonuclease YbeY (160 aa).

Zn(2+)-binding residues include His-124, His-128, and His-134.

Belongs to the endoribonuclease YbeY family. The cofactor is Zn(2+).

Its subcellular location is the cytoplasm. Single strand-specific metallo-endoribonuclease involved in late-stage 70S ribosome quality control and in maturation of the 3' terminus of the 16S rRNA. The chain is Endoribonuclease YbeY from Jannaschia sp. (strain CCS1).